We begin with the raw amino-acid sequence, 85 residues long: Hepcidin (85 aa).

The N-terminal stretch at Met-1–Ser-22 is a signal peptide. Residues Val-23 to Leu-54 constitute a propeptide that is removed on maturation. 4 disulfide bridges follow: Cys-67-Cys-83, Cys-70-Cys-73, Cys-71-Cys-79, and Cys-74-Cys-82.

It belongs to the hepcidin family. In terms of assembly, interacts with SLC40A1; this interaction promotes SLC40A1 rapid ubiquitination.

The protein localises to the secreted. Functionally, liver-produced hormone that constitutes the main circulating regulator of iron absorption and distribution across tissues. Acts by promoting endocytosis and degradation of ferroportin/SLC40A1, leading to the retention of iron in iron-exporting cells and decreased flow of iron into plasma. Controls the major flows of iron into plasma: absorption of dietary iron in the intestine, recycling of iron by macrophages, which phagocytose old erythrocytes and other cells, and mobilization of stored iron from hepatocytes. Has strong antimicrobial activity against E.coli ML35P N.cinerea and weaker against S.epidermidis, S.aureus and group b streptococcus bacteria. Active against the fungus C.albicans. No activity against P.aeruginosa. This is Hepcidin (HAMP) from Canis lupus familiaris (Dog).